A 263-amino-acid chain; its full sequence is MKTLVVKCFLLLALVCSCRAADSIWQLCNTNSNISASSQVSKNIDSLLATLVSKTPSKGFKTTTSSSYNNKEKVYGLAQCRGDISNTDCSTCIQDAAKKIREVCQNQSDSRILYDFCFLRYSQENFIGKLDTGAGLIYFNVANVTEIDPKKFDNELGALFDKIRSEAVLPKNKGLGKGKTKLTPFVTLNGLVQCTRDLSELDCAQCFATAVGSFMTTCHNKKGCRVLYSSCYVRYEFYPFYFPLDPAKTGPSVGRISSVHLSP.

An N-terminal signal peptide occupies residues Met1–Ala20. Gnk2-homologous domains are found at residues Asp22–Phe126 and Thr132–Phe240.

The protein belongs to the cysteine-rich repeat secretory protein family.

The protein resides in the secreted. The chain is Cysteine-rich repeat secretory protein 55 (CRRSP55) from Arabidopsis thaliana (Mouse-ear cress).